A 568-amino-acid chain; its full sequence is Archaeosine synthase subunit alpha (568 aa).

In terms of domain architecture, PUA spans 496–565 (YDALKSYWVK…AKKGVAVKVR (70 aa)).

This sequence belongs to the archaeosine synthase type 1 family. In terms of assembly, forms a robust complex with the archaeosine synthase beta subunit RaSEA, likely an alpha(2)beta(2) heterotetrameric structure. Formation of this complex highly increases lysine transfer activity.

It carries out the reaction 7-cyano-7-carbaguanosine(15) in tRNA + L-lysine = 7-N-[(5S)-5-amino-5-carboxypentyl]formamidino-7-deazaguanosine(15) in tRNA. It participates in tRNA modification; archaeosine-tRNA biosynthesis. Functionally, functions in the biosynthesis of archaeosine, a modified nucleoside present in the dihydrouridine loop (D-loop) of archaeal tRNAs. Catalyzes the addition of L-lysine to the cyano group of 7-cyano-7-deazaguanine (preQ0)-modified tRNAs at position 15, to generate q0kN15-tRNA, a q0N lysine adduct identified as 7-N-[(5S)-5-amino-5-carboxypentyl]formamidino-7-deazaguanosine. The sequence is that of Archaeosine synthase subunit alpha from Thermococcus kodakarensis (strain ATCC BAA-918 / JCM 12380 / KOD1) (Pyrococcus kodakaraensis (strain KOD1)).